A 200-amino-acid polypeptide reads, in one-letter code: Small ribosomal subunit protein uS4 (200 aa).

A disordered region spans residues 22–42; it reads TGKELEKRPYAPGPHGPNQRK. The S4 RNA-binding domain maps to 92–152; the sequence is ARLDNLVYRM…EKSNNLVVVK (61 aa).

It belongs to the universal ribosomal protein uS4 family. Part of the 30S ribosomal subunit. Contacts protein S5. The interaction surface between S4 and S5 is involved in control of translational fidelity.

Functionally, one of the primary rRNA binding proteins, it binds directly to 16S rRNA where it nucleates assembly of the body of the 30S subunit. Its function is as follows. With S5 and S12 plays an important role in translational accuracy. The sequence is that of Small ribosomal subunit protein uS4 from Bacillus thuringiensis subsp. konkukian (strain 97-27).